Reading from the N-terminus, the 225-residue chain is Transmembrane protein C16orf54 homolog (225 aa).

Residues 32–52 (PCIPIMLGLASLTAFFIITTA) traverse the membrane as a helical segment. 2 disordered regions span residues 106 to 163 (DRAP…ERPH) and 178 to 200 (EAGL…EPDW). Residues threonine 113 and threonine 117 each carry the phosphothreonine modification. The span at 122–140 (ATAPPATSAPYSSLSSLVP) shows a compositional bias: low complexity. Serine 195 carries the post-translational modification Phosphoserine.

It localises to the membrane. The polypeptide is Transmembrane protein C16orf54 homolog (Mus musculus (Mouse)).